A 344-amino-acid polypeptide reads, in one-letter code: Dihydroorotase (344 aa).

Zn(2+) is bound by residues histidine 13 and histidine 15. Residues 15–17 (HLR) and asparagine 41 each bind substrate. 3 residues coordinate Zn(2+): lysine 99, histidine 136, and histidine 174. At lysine 99 the chain carries N6-carboxylysine. Histidine 136 contacts substrate. Position 219 (leucine 219) interacts with substrate. Aspartate 247 is a binding site for Zn(2+). Aspartate 247 is a catalytic residue. Positions 251 and 263 each coordinate substrate.

The protein belongs to the metallo-dependent hydrolases superfamily. DHOase family. Class II DHOase subfamily. As to quaternary structure, homodimer. Requires Zn(2+) as cofactor.

The catalysed reaction is (S)-dihydroorotate + H2O = N-carbamoyl-L-aspartate + H(+). It functions in the pathway pyrimidine metabolism; UMP biosynthesis via de novo pathway; (S)-dihydroorotate from bicarbonate: step 3/3. In terms of biological role, catalyzes the reversible cyclization of carbamoyl aspartate to dihydroorotate. The chain is Dihydroorotase from Acinetobacter baumannii (strain SDF).